Reading from the N-terminus, the 1070-residue chain is RecBCD enzyme subunit RecC (1070 aa).

The protein belongs to the RecC family. As to quaternary structure, heterotrimer of RecB, RecC and RecD. All subunits contribute to DNA-binding.

Its function is as follows. A helicase/nuclease that prepares dsDNA breaks (DSB) for recombinational DNA repair. Binds to DSBs and unwinds DNA via a highly rapid and processive ATP-dependent bidirectional helicase activity. Unwinds dsDNA until it encounters a Chi (crossover hotspot instigator) sequence from the 3' direction. Cuts ssDNA a few nucleotides 3' to the Chi site. The properties and activities of the enzyme are changed at Chi. The Chi-altered holoenzyme produces a long 3'-ssDNA overhang and facilitates RecA-binding to the ssDNA for homologous DNA recombination and repair. Holoenzyme degrades any linearized DNA that is unable to undergo homologous recombination. In the holoenzyme this subunit recognizes the wild-type Chi sequence, and when added to isolated RecB increases its ATP-dependent helicase processivity. The chain is RecBCD enzyme subunit RecC from Buchnera aphidicola subsp. Acyrthosiphon pisum (strain APS) (Acyrthosiphon pisum symbiotic bacterium).